We begin with the raw amino-acid sequence, 528 residues long: Linear primary-alkylsulfatase (528 aa).

His-42, His-44, Asp-46, His-47, Glu-151, and Glu-170 together coordinate Zn(2+). Sulfate-binding positions include 179 to 184 (NVHTLR) and Arg-189. His-213 contacts Zn(2+). Position 275 (Tyr-275) interacts with sulfate.

Belongs to the metallo-beta-lactamase superfamily. Type III sulfatase family. Zn(2+) serves as cofactor.

It carries out the reaction a primary linear alkyl sulfate ester + H2O = a primary alcohol + sulfate + H(+). Alkylsulfatase that cleaves the widely used detergent sodium dodecyl sulfate (SDS), which allows the bacterium to use SDS as a sole carbon or sulfur source. This Pseudomonas sp. (strain ATCC 19151) protein is Linear primary-alkylsulfatase.